The following is a 492-amino-acid chain: N-succinylglutamate 5-semialdehyde dehydrogenase (492 aa).

220–225 is an NAD(+) binding site; the sequence is GSANTG. Active-site residues include Glu243 and Cys277.

The protein belongs to the aldehyde dehydrogenase family. AstD subfamily.

It catalyses the reaction N-succinyl-L-glutamate 5-semialdehyde + NAD(+) + H2O = N-succinyl-L-glutamate + NADH + 2 H(+). The protein operates within amino-acid degradation; L-arginine degradation via AST pathway; L-glutamate and succinate from L-arginine: step 4/5. In terms of biological role, catalyzes the NAD-dependent reduction of succinylglutamate semialdehyde into succinylglutamate. The chain is N-succinylglutamate 5-semialdehyde dehydrogenase from Escherichia coli (strain SE11).